The primary structure comprises 205 residues: Small ribosomal subunit protein mS26 (205 aa).

The N-terminal 27 residues, 1–27, are a transit peptide targeting the mitochondrion; sequence MLRALSRLGAGTPCRPRAPLVLPARGR.

It belongs to the mitochondrion-specific ribosomal protein mS26 family. As to quaternary structure, component of the mitochondrial small ribosomal subunit (mt-SSU). Mature mammalian 55S mitochondrial ribosomes consist of a small (28S) and a large (39S) subunit. The 28S small subunit contains a 12S ribosomal RNA (12S mt-rRNA) and 30 different proteins. The 39S large subunit contains a 16S rRNA (16S mt-rRNA), a copy of mitochondrial valine transfer RNA (mt-tRNA(Val)), which plays an integral structural role, and 52 different proteins.

The protein localises to the mitochondrion. This Homo sapiens (Human) protein is Small ribosomal subunit protein mS26 (MRPS26).